The chain runs to 155 residues: S-ribosylhomocysteine lyase (155 aa).

3 residues coordinate Fe cation: His54, His58, and Cys122.

The protein belongs to the LuxS family. Homodimer. Requires Fe cation as cofactor.

The catalysed reaction is S-(5-deoxy-D-ribos-5-yl)-L-homocysteine = (S)-4,5-dihydroxypentane-2,3-dione + L-homocysteine. Its function is as follows. Involved in the synthesis of autoinducer 2 (AI-2) which is secreted by bacteria and is used to communicate both the cell density and the metabolic potential of the environment. The regulation of gene expression in response to changes in cell density is called quorum sensing. Catalyzes the transformation of S-ribosylhomocysteine (RHC) to homocysteine (HC) and 4,5-dihydroxy-2,3-pentadione (DPD). The protein is S-ribosylhomocysteine lyase of Deinococcus deserti (strain DSM 17065 / CIP 109153 / LMG 22923 / VCD115).